We begin with the raw amino-acid sequence, 227 residues long: Urease accessory protein UreF (227 aa).

The protein belongs to the UreF family. As to quaternary structure, ureD, UreF and UreG form a complex that acts as a GTP-hydrolysis-dependent molecular chaperone, activating the urease apoprotein by helping to assemble the nickel containing metallocenter of UreC. The UreE protein probably delivers the nickel.

The protein localises to the cytoplasm. In terms of biological role, required for maturation of urease via the functional incorporation of the urease nickel metallocenter. The protein is Urease accessory protein UreF of Actinobacillus pleuropneumoniae serotype 3 (strain JL03).